The following is a 925-amino-acid chain: Protein translocase subunit SecA (925 aa).

ATP contacts are provided by residues glutamine 87, 105–109 (GEGKT), and aspartate 512. The Zn(2+) site is built by cysteine 910, cysteine 912, cysteine 921, and histidine 922.

The protein belongs to the SecA family. Monomer and homodimer. Part of the essential Sec protein translocation apparatus which comprises SecA, SecYEG and auxiliary proteins SecDF-YajC and YidC. The cofactor is Zn(2+).

Its subcellular location is the cell inner membrane. The protein localises to the cytoplasm. The enzyme catalyses ATP + H2O + cellular proteinSide 1 = ADP + phosphate + cellular proteinSide 2.. Its function is as follows. Part of the Sec protein translocase complex. Interacts with the SecYEG preprotein conducting channel. Has a central role in coupling the hydrolysis of ATP to the transfer of proteins into and across the cell membrane, serving both as a receptor for the preprotein-SecB complex and as an ATP-driven molecular motor driving the stepwise translocation of polypeptide chains across the membrane. The sequence is that of Protein translocase subunit SecA from Psychrobacter sp. (strain PRwf-1).